A 369-amino-acid polypeptide reads, in one-letter code: D-alanine--D-alanine ligase (369 aa).

Residues 152–359 enclose the ATP-grasp domain; that stretch reads KKLFAAEGLP…YPSLLATMVE (208 aa). 180-235 contacts ATP; that stretch reads RERLGLPVFVKPARGGSSIGVSRVSSWDELDAAVAAARDHDPKVIVEAAIAGRELE. Positions 314, 326, and 328 each coordinate Mg(2+).

Belongs to the D-alanine--D-alanine ligase family. The cofactor is Mg(2+). Requires Mn(2+) as cofactor.

It is found in the cytoplasm. The catalysed reaction is 2 D-alanine + ATP = D-alanyl-D-alanine + ADP + phosphate + H(+). The protein operates within cell wall biogenesis; peptidoglycan biosynthesis. Its function is as follows. Cell wall formation. The sequence is that of D-alanine--D-alanine ligase from Mycolicibacterium paratuberculosis (strain ATCC BAA-968 / K-10) (Mycobacterium paratuberculosis).